A 242-amino-acid chain; its full sequence is DNA repair protein RecO (242 aa).

This sequence belongs to the RecO family.

In terms of biological role, involved in DNA repair and RecF pathway recombination. The sequence is that of DNA repair protein RecO from Paracoccus denitrificans (strain Pd 1222).